Reading from the N-terminus, the 342-residue chain is Anthranilate phosphoribosyltransferase (342 aa).

5-phospho-alpha-D-ribose 1-diphosphate-binding positions include Gly-90, 93 to 94, Thr-98, 100 to 103, 118 to 126, and Ala-130; these read GD, NIST, and KHGNRSVSS. Residue Gly-90 coordinates anthranilate. Ser-102 is a binding site for Mg(2+). Asn-121 provides a ligand contact to anthranilate. Arg-176 is a binding site for anthranilate. Mg(2+) is bound by residues Asp-234 and Glu-235.

This sequence belongs to the anthranilate phosphoribosyltransferase family. As to quaternary structure, homodimer. It depends on Mg(2+) as a cofactor.

The catalysed reaction is N-(5-phospho-beta-D-ribosyl)anthranilate + diphosphate = 5-phospho-alpha-D-ribose 1-diphosphate + anthranilate. Its pathway is amino-acid biosynthesis; L-tryptophan biosynthesis; L-tryptophan from chorismate: step 2/5. Catalyzes the transfer of the phosphoribosyl group of 5-phosphorylribose-1-pyrophosphate (PRPP) to anthranilate to yield N-(5'-phosphoribosyl)-anthranilate (PRA). In Mannheimia succiniciproducens (strain KCTC 0769BP / MBEL55E), this protein is Anthranilate phosphoribosyltransferase.